We begin with the raw amino-acid sequence, 105 residues long: Small ribosomal subunit protein uS10 (105 aa).

This sequence belongs to the universal ribosomal protein uS10 family. Part of the 30S ribosomal subunit.

Involved in the binding of tRNA to the ribosomes. This is Small ribosomal subunit protein uS10 from Francisella philomiragia subsp. philomiragia (strain ATCC 25017 / CCUG 19701 / FSC 153 / O#319-036).